Reading from the N-terminus, the 237-residue chain is Arginine-binding periplasmic protein (237 aa).

The signal sequence occupies residues 1–18 (MKKTLLTLLFGCVVTAQA).

It belongs to the bacterial solute-binding protein 3 family.

It is found in the periplasm. Functionally, binds arginine; part of the arginine periplasmic transport system. In Mannheimia haemolytica (Pasteurella haemolytica), this protein is Arginine-binding periplasmic protein (lapT).